Here is a 321-residue protein sequence, read N- to C-terminus: ATP-dependent 6-phosphofructokinase (321 aa).

Position 10 (glycine 10) interacts with ATP. 20–24 (RAVVR) provides a ligand contact to ADP. Residues 71 to 72 (RD) and 101 to 104 (GEGT) each bind ATP. Glutamate 102 is a Mg(2+) binding site. 125–127 (TID) contacts substrate. The active-site Proton acceptor is aspartate 127. Position 154 (arginine 154) interacts with ADP. Substrate is bound by residues arginine 162 and 169 to 171 (MGR). Residues 185–187 (GAE) and 213–215 (KLH) each bind ADP. Substrate is bound by residues glutamate 222, arginine 246, and 252–255 (HIQR).

This sequence belongs to the phosphofructokinase type A (PFKA) family. ATP-dependent PFK group I subfamily. Prokaryotic clade 'B1' sub-subfamily. Homotetramer. It depends on Mg(2+) as a cofactor.

The protein resides in the cytoplasm. The enzyme catalyses beta-D-fructose 6-phosphate + ATP = beta-D-fructose 1,6-bisphosphate + ADP + H(+). It functions in the pathway carbohydrate degradation; glycolysis; D-glyceraldehyde 3-phosphate and glycerone phosphate from D-glucose: step 3/4. Its activity is regulated as follows. Allosterically activated by ADP and other diphosphonucleosides, and allosterically inhibited by phosphoenolpyruvate. Functionally, catalyzes the phosphorylation of D-fructose 6-phosphate to fructose 1,6-bisphosphate by ATP, the first committing step of glycolysis. This chain is ATP-dependent 6-phosphofructokinase, found in Aquifex aeolicus (strain VF5).